A 70-amino-acid polypeptide reads, in one-letter code: Non-histone chromosomal protein H6 (70 aa).

The segment at 1–70 (MPKRKSATKG…AAGDGAGNAK (70 aa)) is disordered. Residues 30–45 (AKPKKAAAPKKAVKGK) are compositionally biased toward basic residues. Residues 46–57 (KAAENGDAKAEA) are compositionally biased toward basic and acidic residues.

It belongs to the HMGN family.

The protein resides in the nucleus. Its subcellular location is the secreted. Non-histone protein that probably binds to the inner side of nucleosomal DNA, altering the association between the DNA and the nucleosome octamer. Its function is as follows. Oncorhyncin III has antibacterial activity against Gram-positive and Gram-negative bacteria at submicromolar concentrations. The chain is Non-histone chromosomal protein H6 from Oncorhynchus mykiss (Rainbow trout).